A 402-amino-acid chain; its full sequence is Sulfate adenylyltransferase (402 aa).

The protein belongs to the sulfate adenylyltransferase family.

The catalysed reaction is sulfate + ATP + H(+) = adenosine 5'-phosphosulfate + diphosphate. Its pathway is sulfur metabolism; hydrogen sulfide biosynthesis; sulfite from sulfate: step 1/3. This chain is Sulfate adenylyltransferase, found in Ruthia magnifica subsp. Calyptogena magnifica.